A 955-amino-acid chain; its full sequence is GPI inositol-deacylase B (955 aa).

Asn-7 carries an N-linked (GlcNAc...) asparagine glycan. The helical transmembrane segment at 8-28 threads the bilayer; the sequence is ASVALWTVFTILTIWISFALH. The active site involves Ser-180. A glycan (N-linked (GlcNAc...) asparagine) is linked at Asn-431. A run of 4 helical transmembrane segments spans residues 489–509, 600–620, 643–663, and 703–723; these read IAFP…SGGV, LLFS…FWRY, YLSW…FEFI, and PIGV…VVVV. Asn-753 is a glycosylation site (N-linked (GlcNAc...) asparagine). The next 3 membrane-spanning stretches (helical) occupy residues 772 to 792, 840 to 860, and 870 to 890; these read VIIA…LAFA, TMSV…AVWV, and IFSS…IENL. An N-linked (GlcNAc...) asparagine glycan is attached at Asn-914. A helical membrane pass occupies residues 919 to 939; that stretch reads GMMHAFMIHHWFNLLAGWLLI. The N-linked (GlcNAc...) asparagine glycan is linked to Asn-945.

The protein belongs to the GPI inositol-deacylase family.

Its subcellular location is the endoplasmic reticulum membrane. Its function is as follows. Involved in inositol deacylation of GPI-anchored proteins which plays important roles in the quality control and ER-associated degradation of GPI-anchored proteins. The chain is GPI inositol-deacylase B (BST1B) from Yarrowia lipolytica (strain CLIB 122 / E 150) (Yeast).